Here is a 428-residue protein sequence, read N- to C-terminus: 3-phosphoshikimate 1-carboxyvinyltransferase (428 aa).

3-phosphoshikimate is bound by residues Lys-20, Ser-21, and Arg-25. Lys-20 contributes to the phosphoenolpyruvate binding site. The phosphoenolpyruvate site is built by Gly-92 and Arg-120. 3-phosphoshikimate contacts are provided by Ser-166, Gln-168, Asp-314, and Lys-341. Gln-168 is a binding site for phosphoenolpyruvate. Residue Asp-314 is the Proton acceptor of the active site. 2 residues coordinate phosphoenolpyruvate: Arg-345 and Arg-387.

The protein belongs to the EPSP synthase family. As to quaternary structure, monomer.

It localises to the cytoplasm. It catalyses the reaction 3-phosphoshikimate + phosphoenolpyruvate = 5-O-(1-carboxyvinyl)-3-phosphoshikimate + phosphate. Its pathway is metabolic intermediate biosynthesis; chorismate biosynthesis; chorismate from D-erythrose 4-phosphate and phosphoenolpyruvate: step 6/7. Its function is as follows. Catalyzes the transfer of the enolpyruvyl moiety of phosphoenolpyruvate (PEP) to the 5-hydroxyl of shikimate-3-phosphate (S3P) to produce enolpyruvyl shikimate-3-phosphate and inorganic phosphate. This is 3-phosphoshikimate 1-carboxyvinyltransferase from Listeria monocytogenes serovar 1/2a (strain ATCC BAA-679 / EGD-e).